Consider the following 684-residue polypeptide: Pescadillo homolog (684 aa).

The tract at residues 284 to 352 is disordered; sequence DAAAAEASSN…DSDEEADDEA (69 aa). Positions 285-294 are enriched in low complexity; it reads AAAAEASSNA. Positions 296–310 are enriched in basic and acidic residues; it reads TRKDGKKLSTRDVKR. The segment covering 342 to 352 has biased composition (acidic residues); the sequence is QDSDEEADDEA. A BRCT domain is found at 387-486; it reads PLPMLFSRYV…QILPTDPYRP (100 aa). Disordered regions lie at residues 508–580 and 612–684; these read GYVP…ALLA and AASL…NKKP. Residues 528–543 show a composition bias toward acidic residues; it reads ADEDEDEDEDEDEDED. The segment covering 544-570 has biased composition (basic and acidic residues); it reads KAGSGRGDDKNVAAREQDAVEKHDKTP. Residues 612 to 624 are compositionally biased toward basic residues; it reads AASLKSHKKKKRT. Basic and acidic residues predominate over residues 663–675; it reads KKKEEKMRLEAKK.

This sequence belongs to the pescadillo family. In terms of assembly, component of the NOP7 complex, composed of ERB1, NOP7 and YTM1. The complex is held together by ERB1, which interacts with NOP7 via its N-terminal domain and with YTM1 via a high-affinity interaction between the seven-bladed beta-propeller domains of the 2 proteins. The NOP7 complex associates with the 66S pre-ribosome.

The protein resides in the nucleus. Its subcellular location is the nucleolus. The protein localises to the nucleoplasm. In terms of biological role, component of the NOP7 complex, which is required for maturation of the 25S and 5.8S ribosomal RNAs and formation of the 60S ribosome. The chain is Pescadillo homolog from Malassezia globosa (strain ATCC MYA-4612 / CBS 7966) (Dandruff-associated fungus).